We begin with the raw amino-acid sequence, 545 residues long: Eukaryotic translation initiation factor 3 subunit D-2 (545 aa).

The span at Phe-99–Thr-113 shows a compositional bias: basic residues. Positions Phe-99–Arg-158 are disordered. Gly residues predominate over residues Gly-114–Pro-127. Positions Glu-133–Arg-145 are enriched in basic and acidic residues. The RNA gate stretch occupies residues Gln-287–Pro-301.

It belongs to the eIF-3 subunit D family. In terms of assembly, component of the eukaryotic translation initiation factor 3 (eIF-3) complex. The eIF-3 complex interacts with pix.

It localises to the cytoplasm. Its function is as follows. mRNA cap-binding component of the eukaryotic translation initiation factor 3 (eIF-3) complex, which is involved in protein synthesis of a specialized repertoire of mRNAs and, together with other initiation factors, stimulates binding of mRNA and methionyl-tRNAi to the 40S ribosome. The eIF-3 complex specifically targets and initiates translation of a subset of mRNAs involved in cell proliferation. In the eIF-3 complex, eif3d specifically recognizes and binds the 7-methylguanosine cap of a subset of mRNAs. The polypeptide is Eukaryotic translation initiation factor 3 subunit D-2 (Drosophila persimilis (Fruit fly)).